The following is a 436-amino-acid chain: GTPase Der (436 aa).

EngA-type G domains follow at residues 4–167 (PTVA…PTEA) and 175–351 (IKFS…QSQN). GTP contacts are provided by residues 10-17 (GRPNVGKS), 57-61 (DTGGI), 119-122 (NKVD), 181-188 (GRPNVGKS), 229-233 (DTAGM), and 294-297 (NKWD). In terms of domain architecture, KH-like spans 352–436 (TRIPSAVLND…PIRLIARKRK (85 aa)).

This sequence belongs to the TRAFAC class TrmE-Era-EngA-EngB-Septin-like GTPase superfamily. EngA (Der) GTPase family. As to quaternary structure, associates with the 50S ribosomal subunit.

GTPase that plays an essential role in the late steps of ribosome biogenesis. The sequence is that of GTPase Der from Streptococcus mutans serotype c (strain ATCC 700610 / UA159).